An 836-amino-acid polypeptide reads, in one-letter code: V-type proton ATPase subunit C (836 aa).

Residues 116-144 (LSLRHQRKHQHTHHQNKPQHYHHHHHHHQ) are compositionally biased toward basic residues. Disordered stretches follow at residues 116–169 (LSLR…ASAP), 302–403 (APTT…SVQS), 415–453 (KPKR…QNHN), and 496–544 (PSQL…PLSP). Positions 160 to 169 (ATPPAPASAP) are enriched in pro residues. The segment covering 302 to 316 (APTTSSSVHSSMSRS) has biased composition (low complexity). Composition is skewed to polar residues over residues 319–348 (KRLN…HLAT) and 364–374 (TNPLQSPVQKS). Over residues 425 to 450 (AQQQHETAQLQHQQTTQQHATPLTPQ) the composition is skewed to low complexity. Over residues 496 to 511 (PSQLNINNGFNLTPTH) the composition is skewed to polar residues. Over residues 512 to 529 (RSSPVSSCCGSSSQGRSS) the composition is skewed to low complexity.

Belongs to the V-ATPase C subunit family. In terms of assembly, V-ATPase is a heteromultimeric enzyme made up of two complexes: the ATP-hydrolytic V1 complex and the proton translocation V0 complex. The V1 complex consists of three catalytic AB heterodimers that form a heterohexamer, three peripheral stalks each consisting of EG heterodimers, one central rotor including subunits D and F, and the regulatory subunits C and H. The proton translocation complex V0 consists of the proton transport subunit a, a ring of proteolipid subunits c9c'', rotary subunit d, subunits e and f, and the accessory subunits VhaAC45 and ATP6AP2. In terms of tissue distribution, in larvae, expressed in the ring gland, CNS, imaginal disks and lymph gland.

Subunit of the V1 complex of vacuolar(H+)-ATPase (V-ATPase), a multisubunit enzyme composed of a peripheral complex (V1) that hydrolyzes ATP and a membrane integral complex (V0) that translocates protons. V-ATPase is responsible for acidifying and maintaining the pH of intracellular compartments and in some cell types, is targeted to the plasma membrane, where it is responsible for acidifying the extracellular environment. Subunit C is necessary for the assembly of the catalytic sector of the enzyme and is likely to have a specific function in its catalytic activity. In enterocytes, acts as part of a pHCl-2 sensory pathway which mediates Tor-dependent larval growth and metabolism in response to zinc availability. Likely acts in maintaining enterocyte lysosomal acidification which consequently promotes Tor activation at the lysosome membrane. This Drosophila melanogaster (Fruit fly) protein is V-type proton ATPase subunit C (Vha44).